The following is a 170-amino-acid chain: Ubiquitin-conjugating enzyme E2 2 (170 aa).

One can recognise a UBC core domain in the interval 4–150 (PARRRLMRDF…VKETVEKSWE (147 aa)). Cys88 functions as the Glycyl thioester intermediate in the catalytic mechanism. The disordered stretch occupies residues 148 to 170 (SWEDDLKDMDDGDDDDDDDDDDD). Residues 152 to 170 (DLKDMDDGDDDDDDDDDDD) show a composition bias toward acidic residues.

Belongs to the ubiquitin-conjugating enzyme family.

It localises to the cytoplasm. It is found in the nucleus. The enzyme catalyses S-ubiquitinyl-[E1 ubiquitin-activating enzyme]-L-cysteine + [E2 ubiquitin-conjugating enzyme]-L-cysteine = [E1 ubiquitin-activating enzyme]-L-cysteine + S-ubiquitinyl-[E2 ubiquitin-conjugating enzyme]-L-cysteine.. Its pathway is protein modification; protein ubiquitination. Functionally, catalyzes the covalent attachment of ubiquitin to other proteins. Plays a role in transcription regulation by catalyzing the monoubiquitination of histone H2B to form H2BK123ub1. H2BK123ub1 gives a specific tag for epigenetic transcriptional activation and is also a prerequisite for H3K4me and H3K79me formation. Also involved in postreplication repair of UV-damaged DNA, in N-end rule-dependent protein degradation and in sporulation. This chain is Ubiquitin-conjugating enzyme E2 2 (UBC2), found in Eremothecium gossypii (strain ATCC 10895 / CBS 109.51 / FGSC 9923 / NRRL Y-1056) (Yeast).